The following is a 357-amino-acid chain: Homoserine kinase (357 aa).

This sequence belongs to the GHMP kinase family. Homoserine kinase subfamily.

The catalysed reaction is L-homoserine + ATP = O-phospho-L-homoserine + ADP + H(+). The protein operates within amino-acid biosynthesis; L-threonine biosynthesis; L-threonine from L-aspartate: step 4/5. Functionally, commits homoserine to the threonine biosynthesis pathway by catalyzing its O-phosphorylation. This is Homoserine kinase from Cryptococcus neoformans var. grubii serotype A (strain H99 / ATCC 208821 / CBS 10515 / FGSC 9487) (Filobasidiella neoformans var. grubii).